The chain runs to 70 residues: DNA-directed RNA polymerase subunit omega (70 aa).

The protein belongs to the RNA polymerase subunit omega family. In terms of assembly, the RNAP catalytic core consists of 2 alpha, 1 beta, 1 beta' and 1 omega subunit. When a sigma factor is associated with the core the holoenzyme is formed, which can initiate transcription.

It carries out the reaction RNA(n) + a ribonucleoside 5'-triphosphate = RNA(n+1) + diphosphate. Its function is as follows. Promotes RNA polymerase assembly. Latches the N- and C-terminal regions of the beta' subunit thereby facilitating its interaction with the beta and alpha subunits. The chain is DNA-directed RNA polymerase subunit omega from Nitratiruptor sp. (strain SB155-2).